A 158-amino-acid polypeptide reads, in one-letter code: ATP synthase subunit delta, mitochondrial (158 aa).

A mitochondrion-targeting transit peptide spans 1-22 (MFRLTSARALFRVANVAARRTY).

It belongs to the ATPase epsilon chain family. As to quaternary structure, F-type ATPases have 2 components, CF(1) - the catalytic core - and CF(0) - the membrane proton channel. CF(1) has five subunits: alpha(3), beta(3), gamma(1), delta(1), epsilon(1). CF(0) has three main subunits: a, b and c.

The protein resides in the mitochondrion. The protein localises to the mitochondrion inner membrane. Mitochondrial membrane ATP synthase (F(1)F(0) ATP synthase or Complex V) produces ATP from ADP in the presence of a proton gradient across the membrane which is generated by electron transport complexes of the respiratory chain. F-type ATPases consist of two structural domains, F(1) - containing the extramembraneous catalytic core, and F(0) - containing the membrane proton channel, linked together by a central stalk and a peripheral stalk. During catalysis, ATP turnover in the catalytic domain of F(1) is coupled via a rotary mechanism of the central stalk subunits to proton translocation. Part of the complex F(1) domain and of the central stalk which is part of the complex rotary element. Rotation of the central stalk against the surrounding alpha(3)beta(3) subunits leads to hydrolysis of ATP in three separate catalytic sites on the beta subunits. The protein is ATP synthase subunit delta, mitochondrial (ATP16) of Eremothecium gossypii (strain ATCC 10895 / CBS 109.51 / FGSC 9923 / NRRL Y-1056) (Yeast).